The primary structure comprises 572 residues: Urease subunit alpha (572 aa).

In terms of domain architecture, Urease spans 131 to 572 (GGIDAHIHFI…LPLAQRYFLF (442 aa)). Ni(2+)-binding residues include His-136, His-138, and Lys-219. An N6-carboxylysine modification is found at Lys-219. His-221 contributes to the substrate binding site. Residues His-248 and His-274 each coordinate Ni(2+). The Proton donor role is filled by His-322. Asp-362 contributes to the Ni(2+) binding site.

It belongs to the metallo-dependent hydrolases superfamily. Urease alpha subunit family. As to quaternary structure, heterotrimer of UreA (gamma), UreB (beta) and UreC (alpha) subunits. Three heterotrimers associate to form the active enzyme. Ni cation is required as a cofactor. Post-translationally, carboxylation allows a single lysine to coordinate two nickel ions.

It localises to the cytoplasm. The enzyme catalyses urea + 2 H2O + H(+) = hydrogencarbonate + 2 NH4(+). The protein operates within nitrogen metabolism; urea degradation; CO(2) and NH(3) from urea (urease route): step 1/1. This Thermosynechococcus vestitus (strain NIES-2133 / IAM M-273 / BP-1) protein is Urease subunit alpha.